The chain runs to 130 residues: MAEYGTLLQDLTNNITLEDLEQLKSACKEDIPSEKSEEITTGSAWFSFLESHNKLDKDNLSYIEHIFEISRRPDLLTMVVDYRTRVLKISEEDELDTKLTRIPSAKKYKDIIRQPSEEEIIKLAPPPKKA.

The DED domain maps to 3 to 81; that stretch reads EYGTLLQDLT…RPDLLTMVVD (79 aa). Ser61, Ser90, Ser104, and Ser116 each carry phosphoserine. Positions 98–107 are microtubule-binding; it reads KLTRIPSAKK. A microtubule-binding region spans residues 122–129; that stretch reads KLAPPPKK.

As to quaternary structure, binds RPS6KA3, MAPK3 and MAPK1. Transient interaction with PLD1 and PLD2. Interacts with CASP8 and FADD. Phosphorylated by protein kinase C and calcium-calmodulin-dependent protein kinase. These phosphorylation events are modulated by neurotransmitters or hormones. As to expression, ubiquitously expressed. Most abundant in tissues such as heart, brain, muscle and adipose tissue which utilize glucose as an energy source. Lower expression in glucose-producing tissues. Higher levels of expression are found in tissues from individuals with type 2 diabetes than in controls.

The protein resides in the cytoplasm. Blocks Ras-mediated inhibition of integrin activation and modulates the ERK MAP kinase cascade. Inhibits RPS6KA3 activities by retaining it in the cytoplasm. Inhibits both TNFRSF6- and TNFRSF1A-mediated CASP8 activity and apoptosis. Regulates glucose transport by controlling both the content of SLC2A1 glucose transporters on the plasma membrane and the insulin-dependent trafficking of SLC2A4 from the cell interior to the surface. In Homo sapiens (Human), this protein is Astrocytic phosphoprotein PEA-15 (PEA15).